The sequence spans 140 residues: Nucleoside diphosphate kinase (140 aa).

ATP contacts are provided by Lys-10, Phe-58, Arg-86, Thr-92, Arg-103, and Asn-113. The Pros-phosphohistidine intermediate role is filled by His-116.

This sequence belongs to the NDK family. As to quaternary structure, homohexamer. Mg(2+) serves as cofactor.

The protein resides in the cytoplasm. The enzyme catalyses a 2'-deoxyribonucleoside 5'-diphosphate + ATP = a 2'-deoxyribonucleoside 5'-triphosphate + ADP. It catalyses the reaction a ribonucleoside 5'-diphosphate + ATP = a ribonucleoside 5'-triphosphate + ADP. Functionally, major role in the synthesis of nucleoside triphosphates other than ATP. The ATP gamma phosphate is transferred to the NDP beta phosphate via a ping-pong mechanism, using a phosphorylated active-site intermediate. This chain is Nucleoside diphosphate kinase, found in Methanocaldococcus jannaschii (strain ATCC 43067 / DSM 2661 / JAL-1 / JCM 10045 / NBRC 100440) (Methanococcus jannaschii).